The sequence spans 131 residues: MDTSKGEGKRVIKLPGSQEQGEEEDDIGEDSKKTRALTPSGKRASGSTQRSCQVENCAAEMTNAKPYHRRHKVCEFHAKAPVVLHSGLQQRFCQQCSRFHELSEFDEAKRSCRRRLAGHNERRRKSSHDTH.

Positions 1-10 (MDTSKGEGKR) are enriched in basic and acidic residues. The segment at 1-52 (MDTSKGEGKRVIKLPGSQEQGEEEDDIGEDSKKTRALTPSGKRASGSTQRSC) is disordered. The SBP-type zinc finger occupies 49 to 126 (QRSCQVENCA…AGHNERRRKS (78 aa)). Cysteine 52, cysteine 57, cysteine 74, histidine 77, cysteine 93, cysteine 96, histidine 100, and cysteine 112 together coordinate Zn(2+). A Bipartite nuclear localization signal motif is present at residues 109–125 (KRSCRRRLAGHNERRRK).

The protein resides in the nucleus. Probable transcriptional factor. Binds to the promoter of the SQUAMOSA gene. This chain is Squamosa promoter-binding protein 1 (SBP1), found in Antirrhinum majus (Garden snapdragon).